A 488-amino-acid polypeptide reads, in one-letter code: Ribulose bisphosphate carboxylase large chain (488 aa).

Positions 127 and 177 each coordinate substrate. The active-site Proton acceptor is the Lys-179. Residue Lys-181 participates in substrate binding. Positions 205, 207, and 208 each coordinate Mg(2+). Residue Lys-205 is modified to N6-carboxylysine. His-297 acts as the Proton acceptor in catalysis. Substrate-binding residues include Arg-298, His-330, and Ser-382.

Belongs to the RuBisCO large chain family. Type I subfamily. As to quaternary structure, heterohexadecamer of 8 large chains and 8 small chains. Requires Mg(2+) as cofactor.

It localises to the plastid. The protein localises to the chloroplast. The enzyme catalyses 2 (2R)-3-phosphoglycerate + 2 H(+) = D-ribulose 1,5-bisphosphate + CO2 + H2O. It catalyses the reaction D-ribulose 1,5-bisphosphate + O2 = 2-phosphoglycolate + (2R)-3-phosphoglycerate + 2 H(+). RuBisCO catalyzes two reactions: the carboxylation of D-ribulose 1,5-bisphosphate, the primary event in carbon dioxide fixation, as well as the oxidative fragmentation of the pentose substrate in the photorespiration process. Both reactions occur simultaneously and in competition at the same active site. This is Ribulose bisphosphate carboxylase large chain from Porphyridium aerugineum (Red microalga).